Reading from the N-terminus, the 280-residue chain is Ribonuclease Z (280 aa).

Residues H61, H63, D65, H66, H153, D176, and H240 each contribute to the Zn(2+) site. D65 functions as the Proton acceptor in the catalytic mechanism.

Belongs to the RNase Z family. As to quaternary structure, homodimer. Requires Zn(2+) as cofactor.

The catalysed reaction is Endonucleolytic cleavage of RNA, removing extra 3' nucleotides from tRNA precursor, generating 3' termini of tRNAs. A 3'-hydroxy group is left at the tRNA terminus and a 5'-phosphoryl group is left at the trailer molecule.. Functionally, zinc phosphodiesterase, which displays some tRNA 3'-processing endonuclease activity. Probably involved in tRNA maturation, by removing a 3'-trailer from precursor tRNA. This Mycobacterium avium (strain 104) protein is Ribonuclease Z.